We begin with the raw amino-acid sequence, 373 residues long: MTVAQPLVLLAAGGTGGHLFPAEALALRLRERGIRVVLATDSRVETLSGEFPASEIVSIPSATPSGRSPLARGAALVTLGRGFAAALRVVRRLNPAVAVGFGGYPTVPPLLAAQMLRVPTLLHEQNAVMGRANAFLARGATVIATGVAQQVRGVPERARARRVHTGNPVRPAVLAAAATPYPPLAVEGPLQLLAFGGSQGARVMSEVVPEAVARLPAALRARLTVVQQARAEDLARAEALYGQAGLAAFSVAPFFKDLPARMAAAHLVVARSGASTVAELAVIGRPAILVPLPGSLDQDQAANAAVLGAAGAAFPRPQTDFTPERLAADLTGLFGAPERLIAAAAAAKGAGIPDAAERLAALVVETAIQASTR.

UDP-N-acetyl-alpha-D-glucosamine-binding positions include Thr-15–Gly-17, Asn-126, Arg-170, Ser-198, and Gln-300.

The protein belongs to the glycosyltransferase 28 family. MurG subfamily.

Its subcellular location is the cell inner membrane. It catalyses the reaction di-trans,octa-cis-undecaprenyl diphospho-N-acetyl-alpha-D-muramoyl-L-alanyl-D-glutamyl-meso-2,6-diaminopimeloyl-D-alanyl-D-alanine + UDP-N-acetyl-alpha-D-glucosamine = di-trans,octa-cis-undecaprenyl diphospho-[N-acetyl-alpha-D-glucosaminyl-(1-&gt;4)]-N-acetyl-alpha-D-muramoyl-L-alanyl-D-glutamyl-meso-2,6-diaminopimeloyl-D-alanyl-D-alanine + UDP + H(+). Its pathway is cell wall biogenesis; peptidoglycan biosynthesis. In terms of biological role, cell wall formation. Catalyzes the transfer of a GlcNAc subunit on undecaprenyl-pyrophosphoryl-MurNAc-pentapeptide (lipid intermediate I) to form undecaprenyl-pyrophosphoryl-MurNAc-(pentapeptide)GlcNAc (lipid intermediate II). The chain is UDP-N-acetylglucosamine--N-acetylmuramyl-(pentapeptide) pyrophosphoryl-undecaprenol N-acetylglucosamine transferase from Methylobacterium nodulans (strain LMG 21967 / CNCM I-2342 / ORS 2060).